Consider the following 455-residue polypeptide: La-related protein 6C (455 aa).

The segment covering 1-20 has biased composition (basic and acidic residues); sequence MAQMQREEVESVTTEKKRLD. The interval 1 to 29 is disordered; it reads MAQMQREEVESVTTEKKRLDGGGGSSGAQ. Positions 138–229 constitute an HTH La-type RNA-binding domain; that stretch reads NLLSDDLRLK…KRTSQFTDRD (92 aa). The 89-residue stretch at 236 to 324 folds into the RRM domain; that stretch reads RTVVAENLPD…KGLRVRLLLR (89 aa). Disordered stretches follow at residues 348-396 and 414-455; these read SYES…YAVG and SLGS…PNNL.

Its subcellular location is the nucleus. Its function is as follows. Transcriptional regulator. The protein is La-related protein 6C (LARP6C) of Arabidopsis thaliana (Mouse-ear cress).